Reading from the N-terminus, the 229-residue chain is tRNA pseudouridine synthase B (229 aa).

The active-site Nucleophile is Asp-42.

The protein belongs to the pseudouridine synthase TruB family. Type 1 subfamily.

It catalyses the reaction uridine(55) in tRNA = pseudouridine(55) in tRNA. Functionally, responsible for synthesis of pseudouridine from uracil-55 in the psi GC loop of transfer RNAs. In Ureaplasma urealyticum serovar 10 (strain ATCC 33699 / Western), this protein is tRNA pseudouridine synthase B.